Reading from the N-terminus, the 750-residue chain is MIIRSPEPEVKILVDRDPVKTSFEEWARPGHFSRTLAKGPETTTWIWNLHADAHDFDSHTSDLEEISRKIFSAHFGQLSIIFLWLSGMYFHGARFSNYEAWLSDPTHIRPSAQVVWPIVGQEILNGDVGGGFRGIQITSGFFQIWRASGITSELQLYCTAIGALVFAALMLFAGWFHYHKAAPKLAWFQDVESMLNHHLAGLLGLGSLSWAGHQVHVSLPINQFLDAGVDPKEIPLPHEFILNRDLLAQLYPSFAEGATPFFTLNWSKYAEFLTFRGGLDPVTGGLWLTDIAHHHLAIAILFLIAGHMYRTNWGIGHGLKDILEAHKGPFTGQGHKGLYEILTTSWHAQLALNLAMLGSLTIVVAHHMYSMPPYPYLATDYGTQLSLFTHHMWIGGFLIVGAAAHAAIFMVRDYDPTTRYNDLLDRVLRHRDAIISHLNWACIFLGFHSFGLYIHNDTMSALGRPQDMFSDTAIQLQPVFAQWIQNTHALAPSATAPGATTSTSLTWGGGGLVAVGGKVALLPIPLGTADFLVHHIHAFTIHVTVLILLKGVLFARSSRLIPDKANLGFRFPCDGPGRGGTCQVSAWDHVFLGLFWMYNAISVVIFHFSWKMQSDVWGSINDQGVVTHITGGNFAQSSITINGWLRDFLWAQASQVIQSYGSSLSAYGLFFLGAHFVWAFSLMFLFSGRGYWQELIESIVWAHNKLKVAPATQPRALSIVQGRAVGVTHYLLGGIATTWAFFLARIIAVG.

Helical transmembrane passes span 70 to 93 (IFSA…FHGA), 156 to 179 (LYCT…FHYH), 195 to 219 (LNHH…HVSL), 291 to 309 (IAHH…GHMY), 346 to 369 (WHAQ…HHMY), 385 to 411 (LSLF…IFMV), 433 to 455 (AIIS…LYIH), and 531 to 549 (FLVH…LILL). [4Fe-4S] cluster-binding residues include Cys-573 and Cys-582. 2 helical membrane passes run 589–610 (HVFL…HFSW) and 664–686 (LSAY…MFLF). His-675 serves as a coordination point for chlorophyll a'. Residues Met-683 and Tyr-691 each coordinate chlorophyll a. Position 692 (Trp-692) interacts with phylloquinone. The helical transmembrane segment at 724–744 (AVGVTHYLLGGIATTWAFFLA) threads the bilayer.

The protein belongs to the PsaA/PsaB family. In terms of assembly, the PsaA/B heterodimer binds the P700 chlorophyll special pair and subsequent electron acceptors. PSI consists of a core antenna complex that captures photons, and an electron transfer chain that converts photonic excitation into a charge separation. The eukaryotic PSI reaction center is composed of at least 11 subunits. The cofactor is P700 is a chlorophyll a/chlorophyll a' dimer, A0 is one or more chlorophyll a, A1 is one or both phylloquinones and FX is a shared 4Fe-4S iron-sulfur center..

The protein localises to the plastid. Its subcellular location is the chloroplast thylakoid membrane. The enzyme catalyses reduced [plastocyanin] + hnu + oxidized [2Fe-2S]-[ferredoxin] = oxidized [plastocyanin] + reduced [2Fe-2S]-[ferredoxin]. Functionally, psaA and PsaB bind P700, the primary electron donor of photosystem I (PSI), as well as the electron acceptors A0, A1 and FX. PSI is a plastocyanin-ferredoxin oxidoreductase, converting photonic excitation into a charge separation, which transfers an electron from the donor P700 chlorophyll pair to the spectroscopically characterized acceptors A0, A1, FX, FA and FB in turn. Oxidized P700 is reduced on the lumenal side of the thylakoid membrane by plastocyanin. This is Photosystem I P700 chlorophyll a apoprotein A1 from Nandina domestica (Heavenly bamboo).